The primary structure comprises 230 residues: UPF0494 membrane protein PB2B2.14c (230 aa).

The next 3 helical transmembrane spans lie at 78 to 98, 120 to 140, and 148 to 168; these read WPLL…NFEV, IWGP…GLIY, and AIPL…VAMV.

The protein belongs to the UPF0494 family.

The protein localises to the membrane. This Schizosaccharomyces pombe (strain 972 / ATCC 24843) (Fission yeast) protein is UPF0494 membrane protein PB2B2.14c.